The sequence spans 144 residues: Large ribosomal subunit protein uL15 (144 aa).

The segment at 1–52 (MYLNTISPMKKSNHSSKRKGRGIGSGKGKTSGRGHKGQRSRSGGKVRRGFEG) is disordered. 2 stretches are compositionally biased toward basic residues: residues 11-21 (KSNHSSKRKGR) and 30-47 (TSGRGHKGQRSRSGGKVR).

The protein belongs to the universal ribosomal protein uL15 family. Part of the 50S ribosomal subunit.

Functionally, binds to the 23S rRNA. The protein is Large ribosomal subunit protein uL15 of Wigglesworthia glossinidia brevipalpis.